We begin with the raw amino-acid sequence, 1125 residues long: RGS domain-containing serine/threonine-protein kinase A (1125 aa).

4 disordered regions span residues 1 to 77 (MKTS…GGNK), 96 to 191 (RRNS…IVDD), 276 to 416 (GISP…NNTN), and 455 to 480 (YVGG…PAPE). Low complexity-rich tracts occupy residues 7–30 (SSNS…NNNN) and 37–66 (SSKS…LSSG). Residues 121–136 (LDSKPPKPFDEKDDPI) show a composition bias toward basic and acidic residues. 2 stretches are compositionally biased toward low complexity: residues 159 to 191 (QPQQ…IVDD) and 281 to 342 (NNNN…LNNS). Positions 343 to 361 (PRYLNSSSSPRSMQHLSSK) are enriched in polar residues. Low complexity predominate over residues 362–416 (ITTTTTTTTTTTTTTSDDNNGNTNNNISNNNNIINNSNNNSNSNNNNNNNINNTN). In terms of domain architecture, RGS spans 487-603 (KFIETITDPT…ISSPFNPEWK (117 aa)). The span at 617 to 685 (TTTQPINNFN…NNSNGSNTSS (69 aa)) shows a compositional bias: low complexity. Disordered stretches follow at residues 617-710 (TTTQ…KERS) and 723-762 (NLSN…SNNN). Positions 690–710 (ERLDNIKGNRERVDSNGKERS) are enriched in basic and acidic residues. A compositionally biased stretch (low complexity) spans 723–735 (NLSNHSNSSSNSN). Positions 736–748 (GKDKDKDKDKNEN) are enriched in basic and acidic residues. Over residues 749–762 (TTDNSNNNNNSNNN) the composition is skewed to low complexity. The region spanning 842–1097 (VSIHKWIASG…YLESIIYPSV (256 aa)) is the Protein kinase domain. Residues 848–856 (IASGSSGRV) and Lys-869 each bind ATP. The Proton acceptor role is filled by Asp-963.

The protein belongs to the protein kinase superfamily. TKL Ser/Thr protein kinase family. Post-translationally, autophosphorylated.

It localises to the cytoplasm. It is found in the cell membrane. It carries out the reaction L-seryl-[protein] + ATP = O-phospho-L-seryl-[protein] + ADP + H(+). The catalysed reaction is L-threonyl-[protein] + ATP = O-phospho-L-threonyl-[protein] + ADP + H(+). Up-regulated by cAMP. Serine/threonine kinase involved in negative regulation of chemotaxis. This Dictyostelium discoideum (Social amoeba) protein is RGS domain-containing serine/threonine-protein kinase A (rckA).